Here is a 385-residue protein sequence, read N- to C-terminus: Alkanesulfonate monooxygenase (385 aa).

The protein belongs to the SsuD family.

The enzyme catalyses an alkanesulfonate + FMNH2 + O2 = an aldehyde + FMN + sulfite + H2O + 2 H(+). Functionally, catalyzes the desulfonation of aliphatic sulfonates. This chain is Alkanesulfonate monooxygenase, found in Paraburkholderia phymatum (strain DSM 17167 / CIP 108236 / LMG 21445 / STM815) (Burkholderia phymatum).